Reading from the N-terminus, the 243-residue chain is UPF0246 protein SpyM3_1790 (243 aa).

Belongs to the UPF0246 family.

This is UPF0246 protein SpyM3_1790 from Streptococcus pyogenes serotype M3 (strain ATCC BAA-595 / MGAS315).